The chain runs to 130 residues: MSLMDPLANALNHISNCERVGKKVVYIKPASKLIGRVLKVMQDNGYIGEFEFIEDGRAGIFKVELIGKINKCGAIKPRFPVKKFGYEKFEKRYLPARDFGILIVSTTQGVMSHEEAKKRGLGGRLLAYVY.

It belongs to the universal ribosomal protein uS8 family. As to quaternary structure, part of the 30S ribosomal subunit.

Functionally, one of the primary rRNA binding proteins, it binds directly to 16S rRNA central domain where it helps coordinate assembly of the platform of the 30S subunit. This is Small ribosomal subunit protein uS8 (rps8) from Methanocaldococcus jannaschii (strain ATCC 43067 / DSM 2661 / JAL-1 / JCM 10045 / NBRC 100440) (Methanococcus jannaschii).